The following is a 377-amino-acid chain: Transcription factor EC (377 aa).

Positions 169 to 222 (QKKDNHNLIERRRRYNINYRIKELGTLIPKSNDPDMRWNKGTILKASVEYIKWL) constitute a bHLH domain. The disordered stretch occupies residues 349 to 377 (DPLLSSTSPAASKESSRRSSFSTDDGDDL). The segment covering 353 to 370 (SSTSPAASKESSRRSSFS) has biased composition (low complexity).

This sequence belongs to the MiT/TFE family.

The protein localises to the nucleus. In terms of biological role, transcriptional regulator that acts as a repressor or an activator. Binds DNA. This Gallus gallus (Chicken) protein is Transcription factor EC (TFEC).